A 212-amino-acid chain; its full sequence is Probable GTP-binding protein EngB (212 aa).

The region spanning 22-212 (GVSEFAFFGR…NILSLIAKRI (191 aa)) is the EngB-type G domain. GTP-binding positions include 30-37 (GRSNAGKS), 57-61 (GMTRE), 95-98 (DLPG), 162-165 (TKAD), and 192-195 (ISSA). 2 residues coordinate Mg(2+): Ser-37 and Thr-59.

Belongs to the TRAFAC class TrmE-Era-EngA-EngB-Septin-like GTPase superfamily. EngB GTPase family. It depends on Mg(2+) as a cofactor.

Its function is as follows. Necessary for normal cell division and for the maintenance of normal septation. The chain is Probable GTP-binding protein EngB from Treponema denticola (strain ATCC 35405 / DSM 14222 / CIP 103919 / JCM 8153 / KCTC 15104).